The primary structure comprises 905 residues: Translation initiation factor IF-2 (905 aa).

3 disordered regions span residues 52-84, 116-230, and 269-318; these read QSHGQKEKRRISLKSKTTSTARVTGSSGKSKSV, AKKR…QKKT, and FEKE…FEKP. The span at 65 to 84 shows a compositional bias: polar residues; sequence KSKTTSTARVTGSSGKSKSV. Basic and acidic residues predominate over residues 116–138; it reads AKKRAEEEAKKREQVKKEAEERQ. Low complexity predominate over residues 165–178; that stretch reads VVVKKGSKAAAAAK. Basic and acidic residues-rich tracts occupy residues 190–230 and 269–278; these read PKVE…QKKT and FEKERREIKR. The region spanning 406-575 is the tr-type G domain; that stretch reads TRPPVVTIMG…NLQAELMELE (170 aa). The interval 415–422 is G1; the sequence is GHVDHGKT. Position 415 to 422 (415 to 422) interacts with GTP; that stretch reads GHVDHGKT. Residues 440-444 form a G2 region; it reads GITQH. The segment at 461–464 is G3; it reads DTPG. GTP is bound by residues 461 to 465 and 515 to 518; these read DTPGH and NKMD. The tract at residues 515 to 518 is G4; sequence NKMD. Residues 551 to 553 form a G5 region; it reads SAK.

It belongs to the TRAFAC class translation factor GTPase superfamily. Classic translation factor GTPase family. IF-2 subfamily.

It localises to the cytoplasm. Its function is as follows. One of the essential components for the initiation of protein synthesis. Protects formylmethionyl-tRNA from spontaneous hydrolysis and promotes its binding to the 30S ribosomal subunits. Also involved in the hydrolysis of GTP during the formation of the 70S ribosomal complex. This Psychrobacter sp. (strain PRwf-1) protein is Translation initiation factor IF-2.